Reading from the N-terminus, the 81-residue chain is Photosystem I iron-sulfur center (81 aa).

4Fe-4S ferredoxin-type domains follow at residues 1 to 31 (MSHK…MVPW) and 39 to 68 (IASS…IRVY). Residues Cys-11, Cys-14, Cys-17, Cys-21, Cys-48, Cys-51, Cys-54, and Cys-58 each contribute to the [4Fe-4S] cluster site.

The cyanobacterial PSI reaction center is composed of one copy each of PsaA,B,C,D,E,F,I,J,K,L,M and X, and forms trimeric complexes. The cofactor is [4Fe-4S] cluster.

The protein localises to the cellular thylakoid membrane. The catalysed reaction is reduced [plastocyanin] + hnu + oxidized [2Fe-2S]-[ferredoxin] = oxidized [plastocyanin] + reduced [2Fe-2S]-[ferredoxin]. Functionally, apoprotein for the two 4Fe-4S centers FA and FB of photosystem I (PSI); essential for photochemical activity. FB is the terminal electron acceptor of PSI, donating electrons to ferredoxin. The C-terminus interacts with PsaA/B/D and helps assemble the protein into the PSI complex. Required for binding of PsaD and PsaE to PSI. PSI is a plastocyanin/cytochrome c6-ferredoxin oxidoreductase, converting photonic excitation into a charge separation, which transfers an electron from the donor P700 chlorophyll pair to the spectroscopically characterized acceptors A0, A1, FX, FA and FB in turn. The chain is Photosystem I iron-sulfur center from Crocosphaera subtropica (strain ATCC 51142 / BH68) (Cyanothece sp. (strain ATCC 51142)).